A 162-amino-acid polypeptide reads, in one-letter code: Beta-lactoglobulin (162 aa).

3 disulfide bridges follow: C66/C160, C106/C119, and C106/C121.

The protein belongs to the calycin superfamily. Lipocalin family. In terms of assembly, under physiological conditions beta-lactoglobulin exists as an equilibrium mixture of monomeric and dimeric forms. Post-translationally, alternate disulfide bonds occur in equal amounts.

The protein localises to the secreted. Functionally, lactoglobulin is the primary component of whey, it binds retinol and is probably involved in the transport of that molecule. The protein is Beta-lactoglobulin (LGB) of Ovis aries musimon (Mouflon).